Consider the following 281-residue polypeptide: Probable endonuclease 4 (281 aa).

Residues His69, His109, Glu145, Asp179, His182, His216, Asp229, His231, and Glu261 each contribute to the Zn(2+) site.

The protein belongs to the AP endonuclease 2 family. The cofactor is Zn(2+).

The catalysed reaction is Endonucleolytic cleavage to 5'-phosphooligonucleotide end-products.. In terms of biological role, endonuclease IV plays a role in DNA repair. It cleaves phosphodiester bonds at apurinic or apyrimidinic (AP) sites, generating a 3'-hydroxyl group and a 5'-terminal sugar phosphate. The polypeptide is Probable endonuclease 4 (Proteus mirabilis (strain HI4320)).